The following is a 511-amino-acid chain: NAD(P)H-quinone oxidoreductase subunit 2, chloroplastic (511 aa).

The next 14 helical transmembrane spans lie at 15–35, 39–59, 78–98, 108–128, 132–152, 167–187, 210–230, 244–264, 278–298, 306–326, 334–354, 377–397, 410–430, and 466–486; these read LLPE…DLTF, VLSW…VVLL, SLSI…ILLS, ALTE…LLSG, LIMI…LTGY, LLIG…LYGL, FASW…VAAA, PTPV…ALAT, WHLL…LIAI, MLGY…IAGN, LVYM…IILF, VFCF…AGFF, GFYI…YYYL, and LGIG…NPII.

The protein belongs to the complex I subunit 2 family. In terms of assembly, NDH is composed of at least 16 different subunits, 5 of which are encoded in the nucleus.

It localises to the plastid. Its subcellular location is the chloroplast thylakoid membrane. The enzyme catalyses a plastoquinone + NADH + (n+1) H(+)(in) = a plastoquinol + NAD(+) + n H(+)(out). The catalysed reaction is a plastoquinone + NADPH + (n+1) H(+)(in) = a plastoquinol + NADP(+) + n H(+)(out). Functionally, NDH shuttles electrons from NAD(P)H:plastoquinone, via FMN and iron-sulfur (Fe-S) centers, to quinones in the photosynthetic chain and possibly in a chloroplast respiratory chain. The immediate electron acceptor for the enzyme in this species is believed to be plastoquinone. Couples the redox reaction to proton translocation, and thus conserves the redox energy in a proton gradient. The chain is NAD(P)H-quinone oxidoreductase subunit 2, chloroplastic from Chlorokybus atmophyticus (Soil alga).